The following is an 84-amino-acid chain: MLAYKQIFDKGLKPYYKHSVCLKLFFRFCFLKTHAYQQRYQAFALTLFSCKFFNACKIFLLAIGFKIVFIPILEAKLKRVSNAY.

This is an uncharacterized protein from Helicobacter pylori (strain ATCC 700392 / 26695) (Campylobacter pylori).